The following is a 1118-amino-acid chain: uncharacterized protein (1118 aa).

Disordered regions lie at residues 1-69 (MESG…NGED), 1044-1071 (PKSV…EKID), and 1090-1118 (IRPT…SFEL). The span at 13 to 34 (DMVEEDNDEDSFEEPACEDSFD) shows a compositional bias: acidic residues. Residues 35 to 60 (SQEASSKANEPQNDSFDEPIQSSVSK) show a composition bias toward polar residues. The span at 1107-1118 (EDSDDLEDSFEL) shows a compositional bias: acidic residues.

This is an uncharacterized protein from Caenorhabditis elegans.